The chain runs to 1352 residues: DNA-directed RNA polymerase subunit beta (1352 aa).

Belongs to the RNA polymerase beta chain family. In terms of assembly, the RNAP catalytic core consists of 2 alpha, 1 beta, 1 beta' and 1 omega subunit. When a sigma factor is associated with the core the holoenzyme is formed, which can initiate transcription.

It catalyses the reaction RNA(n) + a ribonucleoside 5'-triphosphate = RNA(n+1) + diphosphate. Functionally, DNA-dependent RNA polymerase catalyzes the transcription of DNA into RNA using the four ribonucleoside triphosphates as substrates. In Hydrogenovibrio crunogenus (strain DSM 25203 / XCL-2) (Thiomicrospira crunogena), this protein is DNA-directed RNA polymerase subunit beta.